A 1459-amino-acid polypeptide reads, in one-letter code: MNFSTLPPEINSALIFGGAGSEPMSAAAVAWDQLAMELASAAASFNSVTSGLVGESWLGPSSAAMAAAVAPYLGWLAAAAAQAQRSATQAAALVAEFEAVRAAMVQPALVAANRSDLVSLVFSNFFGQNAPAIAAIEAAYEQMWAIDVSVMSAYHAGASAVASALTPFTAPPQNLTDLPAQLAAAPAAVVTAAITSSKGVLANLSLGLANSGFGQMGAANLGILNLGSLNPGGNNFGLGNVGSNNVGLGNTGNGNIGFGNTGNGNIGFGLTGDNQQGFGGWNSGTGNIGLFNSGTGNIGIGNTGTGNFGIGNSGTSYNTGIGNTGQANTGFFNAGIANTGIGNTGNYNTGSFNLGSFNTGDFNTGSSNTGFFNPGNLNTGVGNTGNVNTGGFNSGNYSNGFFWRGDYQGLIGFSGTLTIPAAGLDLNGLGSVGPITIPSITIPEIGLGINSSGALVGPINVPPITVPAIGLGINSTGALVGPINIPPITLNSIGLELSAFQVINVGSISIPASPLAIGLFGVNPTVGSIGPGSISIQLGTPEIPAIPPFFPGFPPDYVTVSGQIGPITFLSGGYSLPAIPLGIDVGGGLGPFTVFPDGYSLPAIPLGIDVGGGLGPFTVFPDGYSLPAIPLGIDVGGGLGPFTVFPDGYSLPAIPLGIDVGGAIGPLTTPPITIPSIPLGIDVSGSLGPINIPIEIAGTPGFGNSTTTPSSGFFNSGTGGTSGFGNVGSGGSGFWNIAGNLGNSGFLNVGPLTSGILNFGNTVSGLYNTSTLGLATSAFHSGVGNTDSQLAGFMRNAAGGTLFNFGFANDGTLNLGNANLGDYNVGSGNVGSYNFGSGNIGNGSFGFGNIGSNNFGFGNVGSNNLGFANTGPGLTEALHNIGFGNIGGNNYGFANIGNGNIGFGNTGTGNIGIGLTGDNQVGFGALNSGSGNIGFFNSGNGNIGFFNSGNGNVGIGNSGNYNTGLGNVGNANTGLFNTGNVNTGIGNAGSYNTGSYNAGDTNTGDLNPGNANTGYLNLGDLNTGWGNIGDLNTGALISGSYSNGILWRGDYQGLIGYSDTLSIPAIPLSVEVNGGIGPIVVPDITIPGIPLSLNALGGVGPIVVPDITIPGIPLSLNALGGVGPIVVPDITIPGIPLSLNALGGVGPIVVPDITIPGIPLSLNALGGVGPIVVPDITIPGIPLSLNALGGVGPITVPGVPISRIPLTINIRIPVNITLNELPFNVAGIFTGYIGPIPLSTFVLGVTLAGGTLESGIQGFSVNPFGLNIPLSGATNAVTIPGFAINPFGLNVPLSGGTSPVTIPGFAINPFGLNVPLSGGTSPVTIPGFTIPGSPLNLTANGGLGPINIPINITSAPGFGNSTTTPSSGFFNSGDGSASGFGNVGPGISGLWNQVPNALQGGVSGIYNVGQLASGVANLGNTVSGFNNTSTVGHLTAAFNSGVNNIGQMLLGFFSPGAGP.

This sequence belongs to the mycobacterial PPE family. In terms of assembly, interacts with human TLR2.

The protein localises to the cell membrane. Its subcellular location is the secreted. It is found in the cell wall. It localises to the cell surface. Functionally, facilitates a shift in the ensuing immunity toward the Th2 phenotype and could aid in immune evasion by mycobacteria. Interacts with human Toll-like receptor 2 (TLR2) and triggers functional maturation of human dendritic cells (DCs), leading to secretion of IL-4, IL-5 and IL-10 from CD4(+) T cells and induction of Th2 immune response. Maturation of DCs involves PI3K, ERK1/2, p38 MAPK and NF-kappa-B signaling pathways. The chain is PPE family protein PPE34 from Mycobacterium tuberculosis (strain ATCC 25618 / H37Rv).